The chain runs to 322 residues: Phosphatidylserine decarboxylase proenzyme (322 aa).

Catalysis depends on charge relay system; for autoendoproteolytic cleavage activity residues D90, H147, and S254. S254 acts as the Schiff-base intermediate with substrate; via pyruvic acid; for decarboxylase activity in catalysis. S254 is subject to Pyruvic acid (Ser); by autocatalysis. The tract at residues 293-322 is disordered; sequence PDAEPAPLPAEEIEAEHDASPLIDDKKDQV. A compositionally biased stretch (basic and acidic residues) spans 308–322; it reads EHDASPLIDDKKDQV.

Belongs to the phosphatidylserine decarboxylase family. PSD-B subfamily. Prokaryotic type I sub-subfamily. In terms of assembly, heterodimer of a large membrane-associated beta subunit and a small pyruvoyl-containing alpha subunit. Requires pyruvate as cofactor. Is synthesized initially as an inactive proenzyme. Formation of the active enzyme involves a self-maturation process in which the active site pyruvoyl group is generated from an internal serine residue via an autocatalytic post-translational modification. Two non-identical subunits are generated from the proenzyme in this reaction, and the pyruvate is formed at the N-terminus of the alpha chain, which is derived from the carboxyl end of the proenzyme. The autoendoproteolytic cleavage occurs by a canonical serine protease mechanism, in which the side chain hydroxyl group of the serine supplies its oxygen atom to form the C-terminus of the beta chain, while the remainder of the serine residue undergoes an oxidative deamination to produce ammonia and the pyruvoyl prosthetic group on the alpha chain. During this reaction, the Ser that is part of the protease active site of the proenzyme becomes the pyruvoyl prosthetic group, which constitutes an essential element of the active site of the mature decarboxylase.

Its subcellular location is the cell membrane. The catalysed reaction is a 1,2-diacyl-sn-glycero-3-phospho-L-serine + H(+) = a 1,2-diacyl-sn-glycero-3-phosphoethanolamine + CO2. It participates in phospholipid metabolism; phosphatidylethanolamine biosynthesis; phosphatidylethanolamine from CDP-diacylglycerol: step 2/2. In terms of biological role, catalyzes the formation of phosphatidylethanolamine (PtdEtn) from phosphatidylserine (PtdSer). The protein is Phosphatidylserine decarboxylase proenzyme of Escherichia coli O127:H6 (strain E2348/69 / EPEC).